Here is a 179-residue protein sequence, read N- to C-terminus: Probable chorismate pyruvate-lyase (179 aa).

Residues R82, L120, and E165 each contribute to the substrate site.

Belongs to the UbiC family.

It is found in the cytoplasm. It carries out the reaction chorismate = 4-hydroxybenzoate + pyruvate. The protein operates within cofactor biosynthesis; ubiquinone biosynthesis. Removes the pyruvyl group from chorismate, with concomitant aromatization of the ring, to provide 4-hydroxybenzoate (4HB) for the ubiquinone pathway. This chain is Probable chorismate pyruvate-lyase, found in Vibrio cholerae serotype O1 (strain ATCC 39315 / El Tor Inaba N16961).